The chain runs to 164 residues: Peptidyl-prolyl cis-trans isomerase A (164 aa).

Met1 bears the N-acetylmethionine mark. Val2 carries the N-acetylvaline; in Peptidyl-prolyl cis-trans isomerase A, N-terminally processed modification. Residues 7–163 (FFDISADGEP…KKITISDCGQ (157 aa)) enclose the PPIase cyclophilin-type domain. Residue Lys28 is modified to N6-acetyllysine; alternate. Residue Lys28 forms a Glycyl lysine isopeptide (Lys-Gly) (interchain with G-Cter in SUMO2); alternate linkage. Residue Lys28 forms a Glycyl lysine isopeptide (Lys-Gly) (interchain with G-Cter in ubiquitin); alternate linkage. Position 44 is an N6-acetyllysine (Lys44). A Phosphoserine modification is found at Ser77. The residue at position 82 (Lys82) is an N6-acetyllysine; alternate. Residue Lys82 forms a Glycyl lysine isopeptide (Lys-Gly) (interchain with G-Cter in SUMO2); alternate linkage. A Phosphothreonine modification is found at Thr93. Asn108 is a glycosylation site (N-linked (GlcNAc...) asparagine). N6-acetyllysine is present on residues Lys125, Lys131, and Lys133.

This sequence belongs to the cyclophilin-type PPIase family. PPIase A subfamily. As to quaternary structure, interacts with protein phosphatase PPP3CA/calcineurin A. Interacts with PRPF19 isoform 2 (via N-terminus). Interacts with isoform 2 of BSG/CD147. Interacts with FOXO1; the interaction promotes FOXO1 dephosphorylation, nuclear accumulation and transcriptional activity. Interacts with integrin ITGA2B:ITGB3; the interaction is ROS and peptidyl-prolyl cis-trans isomerase (PPIase) activity-dependent and is increased in the presence of thrombin. Interacts with MAP3K5. Interacts with TARDBP; the interaction is dependent on the RNA-binding activity of TARDBP and the PPIase activity of PPIA/CYPA and the acetylation of PPIA/CYPA at Lys-125 favors the interaction. Interacts with HNRNPA1, HNRNPA2B1, HNRNPC, RBMX, HNRNPK and HNRNPM. In terms of processing, acetylation at Lys-125 markedly inhibits catalysis of cis to trans isomerization. PPIA acetylation also antagonizes the immunosuppressive effects of cyclosporine by inhibiting the sequential steps of cyclosporine binding and calcineurin inhibition. Acetylation at Lys-125 favors the interaction with TARDBP.

It localises to the cytoplasm. Its subcellular location is the secreted. The protein localises to the nucleus. It carries out the reaction [protein]-peptidylproline (omega=180) = [protein]-peptidylproline (omega=0). Binds cyclosporin A (CsA). CsA mediates some of its effects via an inhibitory action on PPIase. Functionally, catalyzes the cis-trans isomerization of proline imidic peptide bonds in oligopeptides. Exerts a strong chemotactic effect on leukocytes partly through activation of one of its membrane receptors BSG/CD147, initiating a signaling cascade that culminates in MAPK/ERK activation. Activates endothelial cells (ECs) in a proinflammatory manner by stimulating activation of NF-kappa-B and ERK, JNK and p38 MAP-kinases and by inducing expression of adhesion molecules including SELE and VCAM1. Induces apoptosis in ECs by promoting the FOXO1-dependent expression of CCL2 and BCL2L11 which are involved in EC chemotaxis and apoptosis. In response to oxidative stress, initiates proapoptotic and antiapoptotic signaling in ECs via activation of NF-kappa-B and AKT1 and up-regulation of antiapoptotic protein BCL2. Negatively regulates MAP3K5/ASK1 kinase activity, autophosphorylation and oxidative stress-induced apoptosis mediated by MAP3K5/ASK1. Necessary for the assembly of TARDBP in heterogeneous nuclear ribonucleoprotein (hnRNP) complexes and regulates TARDBP binding to RNA UG repeats and TARDBP-dependent expression of HDAC6, ATG7 and VCP which are involved in clearance of protein aggregates. Plays an important role in platelet activation and aggregation. Regulates calcium mobilization and integrin ITGA2B:ITGB3 bidirectional signaling via increased ROS production as well as by facilitating the interaction between integrin and the cell cytoskeleton. Binds heparan sulfate glycosaminoglycans. This chain is Peptidyl-prolyl cis-trans isomerase A (PPIA), found in Cricetulus griseus (Chinese hamster).